The sequence spans 510 residues: Probable allantoinase 2 (510 aa).

Zn(2+) is bound by residues His-97, His-99, Lys-185, His-228, His-287, and Asp-360. N6-carboxylysine is present on Lys-185.

It belongs to the metallo-dependent hydrolases superfamily. Allantoinase family. In terms of assembly, homotetramer. It depends on Zn(2+) as a cofactor. Post-translationally, carboxylation allows a single lysine to coordinate two zinc ions.

It catalyses the reaction (S)-allantoin + H2O = allantoate + H(+). The protein operates within nitrogen metabolism; (S)-allantoin degradation; allantoate from (S)-allantoin: step 1/1. This is Probable allantoinase 2 (allB2) from Dictyostelium discoideum (Social amoeba).